The sequence spans 105 residues: Small ribosomal subunit protein uS10 (105 aa).

Belongs to the universal ribosomal protein uS10 family. Part of the 30S ribosomal subunit.

Its function is as follows. Involved in the binding of tRNA to the ribosomes. In Desulfotalea psychrophila (strain LSv54 / DSM 12343), this protein is Small ribosomal subunit protein uS10.